The primary structure comprises 177 residues: O-acetyl-ADP-ribose deacetylase (177 aa).

The region spanning 1-175 (MKTRIHVVQG…LYERLLTQQG (175 aa)) is the Macro domain. Substrate-binding positions include 11–12 (DI), Asn-25, 33–35 (GVD), and 122–126 (STGVY). Residue Asp-35 is the Proton acceptor of the active site.

It belongs to the MacroD-type family. YmdB subfamily. In terms of assembly, homodimer. Interacts with RNase III.

The catalysed reaction is 3''-O-acetyl-ADP-D-ribose + H2O = ADP-D-ribose + acetate + H(+). It carries out the reaction 2''-O-acetyl-ADP-D-ribose + H2O = ADP-D-ribose + acetate + H(+). Deacetylates O-acetyl-ADP ribose to yield ADP-ribose and free acetate. Down-regulates ribonuclease 3 (RNase III) activity. Acts by interacting directly with the region of the ribonuclease that is required for dimerization/activation. The protein is O-acetyl-ADP-ribose deacetylase of Shigella flexneri serotype 5b (strain 8401).